Reading from the N-terminus, the 199-residue chain is Putative peroxiredoxin ycf42 (199 aa).

The 158-residue stretch at 8–165 (LRVGQLAPDF…TLRVLQAIQY (158 aa)) folds into the Thioredoxin domain. Cys-53 serves as the catalytic Cysteine sulfenic acid (-SOH) intermediate.

The protein belongs to the peroxiredoxin family. AhpC/Prx1 subfamily. In terms of assembly, homodimer; disulfide-linked, upon oxidation. The Cys-53-SH group is the primary site of oxidation by H(2)O(2), and the oxidized Cys-53 (probably Cys-SOH) rapidly reacts with Cys-174-SH of the other subunit to form an intermolecular disulfide. This disulfide is subsequently reduced by thioredoxin.

The protein localises to the plastid. Its subcellular location is the chloroplast. It carries out the reaction a hydroperoxide + [thioredoxin]-dithiol = an alcohol + [thioredoxin]-disulfide + H2O. Its function is as follows. Thiol-specific peroxidase that catalyzes the reduction of hydrogen peroxide and organic hydroperoxides to water and alcohols, respectively. Plays a role in cell protection against oxidative stress by detoxifying peroxides. The polypeptide is Putative peroxiredoxin ycf42 (ycf42) (Pyropia yezoensis (Susabi-nori)).